The sequence spans 470 residues: METTESTEGSLSRSCDVQPSSERLDTPSEPVPSSSSSPRSTAPAEAPAQYSVLTEPSSDSLYGAPCPPAHHRGHGFGFQPFYVSCIPQDPCNMADLSSRADPTSSYPCHSSVHGSGSGTCGLGQSSEPSQGSGPTSGPAPASVPSLVSGPDSASGPDSSASGPALASGPGPADPGQGPKFSTCIPQGYRCIPVDLAPDYNAWCQHLHWKPQRSWEPLQVSEPGVRGPYKPPEPGALGPCEPCEPCEPPEAESEETLCKARPRGQCLLYNWEEERATNQLDQIPPLQDGSESYFFRHGHQGLLTTQPQSPMSSSTTQRDSYQLPRHICQPLRGKREAMLEMLLRHQICKEVQAEQEPARKLFETESVTHHDYRVELVRAAPPASTKPHDYRQEQPETFWIQRAARLPGVSDIRTLDTPFRKNCSFSTPVPLSLGQPLPYELESGPHQVGVISSLACQGGGQGCGRTKTTPI.

The segment covering 1–21 has biased composition (polar residues); that stretch reads METTESTEGSLSRSCDVQPSS. Disordered regions lie at residues 1–70, 117–178, and 302–321; these read METT…PPAH, SGTC…GQGP, and LTTQPQSPMSSSTTQRDSYQ. Low complexity predominate over residues 27–48; that stretch reads PSEPVPSSSSSPRSTAPAEAPA. A compositionally biased stretch (polar residues) spans 51–60; it reads SVLTEPSSDS. 2 stretches are compositionally biased toward low complexity: residues 122-175 and 303-316; these read LGQS…ADPG and TTQPQSPMSSSTTQ. Mn stretches follow at residues 312 to 325 and 364 to 378; these read SSTTQRDSYQLPRH and ESVTHHDYRVELVRA.

It belongs to the SPAG8 family. In terms of assembly, microtubule inner protein component of sperm flagellar doublet microtubules. Interacts with FHL5 (via second LIM domain). Interacts with RANBP9. As to expression, expressed in testis (at protein level). Not detected in brain, heart, kidney, spleen, liver, lung, thymus and colon (at protein level).

The protein resides in the cytoplasm. Its subcellular location is the nucleus. The protein localises to the cytoplasmic vesicle. It is found in the secretory vesicle. It localises to the acrosome. The protein resides in the cytoskeleton. Its subcellular location is the microtubule organizing center. The protein localises to the spindle. It is found in the cilium axoneme. It localises to the flagellum axoneme. Its function is as follows. Microtubule inner protein (MIP) part of the dynein-decorated doublet microtubules (DMTs) in cilia axoneme, which is required for motile cilia beating. Plays a role in spermatogenesis by enhancing the binding of CREM isoform tau to its coactivator FHL5 and increasing the FHL5-regulated transcriptional activation of CREM isoform tau. Involved in the acrosome reaction and in binding of sperm to the zona pellucida. Plays a role in regulation of the cell cycle by controlling progression through the G2/M phase, possibly by delaying the activation of CDK1 which is required for entry into mitosis. May play a role in fertility and microtubule formation through interaction with RANBP9. This Mus musculus (Mouse) protein is Sperm-associated antigen 8.